We begin with the raw amino-acid sequence, 425 residues long: Sucrose-phosphatase 1 (425 aa).

Belongs to the sucrose phosphatase family. As to quaternary structure, homodimer. Mg(2+) serves as cofactor.

It catalyses the reaction sucrose 6(F)-phosphate + H2O = sucrose + phosphate. The protein operates within glycan biosynthesis; sucrose biosynthesis; sucrose from D-fructose 6-phosphate and UDP-alpha-D-glucose: step 2/2. Its activity is regulated as follows. Inhibited by EDTA. Functionally, catalyzes the final step of sucrose synthesis. The polypeptide is Sucrose-phosphatase 1 (SPP1) (Nicotiana tabacum (Common tobacco)).